The chain runs to 292 residues: Phosphatidylserine decarboxylase proenzyme (292 aa).

Active-site charge relay system; for autoendoproteolytic cleavage activity residues include D89, H146, and S252. The active-site Schiff-base intermediate with substrate; via pyruvic acid; for decarboxylase activity is the S252. A Pyruvic acid (Ser); by autocatalysis modification is found at S252.

Belongs to the phosphatidylserine decarboxylase family. PSD-B subfamily. Prokaryotic type I sub-subfamily. In terms of assembly, heterodimer of a large membrane-associated beta subunit and a small pyruvoyl-containing alpha subunit. The cofactor is pyruvate. In terms of processing, is synthesized initially as an inactive proenzyme. Formation of the active enzyme involves a self-maturation process in which the active site pyruvoyl group is generated from an internal serine residue via an autocatalytic post-translational modification. Two non-identical subunits are generated from the proenzyme in this reaction, and the pyruvate is formed at the N-terminus of the alpha chain, which is derived from the carboxyl end of the proenzyme. The autoendoproteolytic cleavage occurs by a canonical serine protease mechanism, in which the side chain hydroxyl group of the serine supplies its oxygen atom to form the C-terminus of the beta chain, while the remainder of the serine residue undergoes an oxidative deamination to produce ammonia and the pyruvoyl prosthetic group on the alpha chain. During this reaction, the Ser that is part of the protease active site of the proenzyme becomes the pyruvoyl prosthetic group, which constitutes an essential element of the active site of the mature decarboxylase.

The protein localises to the cell membrane. The enzyme catalyses a 1,2-diacyl-sn-glycero-3-phospho-L-serine + H(+) = a 1,2-diacyl-sn-glycero-3-phosphoethanolamine + CO2. It functions in the pathway phospholipid metabolism; phosphatidylethanolamine biosynthesis; phosphatidylethanolamine from CDP-diacylglycerol: step 2/2. In terms of biological role, catalyzes the formation of phosphatidylethanolamine (PtdEtn) from phosphatidylserine (PtdSer). The protein is Phosphatidylserine decarboxylase proenzyme of Shewanella sp. (strain MR-4).